Here is a 199-residue protein sequence, read N- to C-terminus: Putative AgrB-like protein (199 aa).

The next 5 membrane-spanning stretches (helical) occupy residues 43 to 63 (IIIFLVFLFIKEIPLFLFSFI), 81 to 101 (YGCLTCSILYFMIILLFTRLF), 108 to 128 (FYIVFFILSLAITFIFAPCPN), 139 to 159 (LKILSLISLTFWIILFYLSPL), and 165 to 185 (ILISIFLQIIQVIIINTKGVI).

This sequence belongs to the AgrB family.

It is found in the cell membrane. In terms of biological role, may be involved in the proteolytic processing of a quorum sensing system signal molecule precursor. The polypeptide is Putative AgrB-like protein (cfg02) (Clostridium beijerinckii (Clostridium MP)).